A 441-amino-acid chain; its full sequence is Trigger factor (441 aa).

Residues 161–246 (GDQVTIDFVG…VSEVAEQILP (86 aa)) enclose the PPIase FKBP-type domain.

Belongs to the FKBP-type PPIase family. Tig subfamily.

Its subcellular location is the cytoplasm. It catalyses the reaction [protein]-peptidylproline (omega=180) = [protein]-peptidylproline (omega=0). Its function is as follows. Involved in protein export. Acts as a chaperone by maintaining the newly synthesized protein in an open conformation. Functions as a peptidyl-prolyl cis-trans isomerase. This is Trigger factor from Marinomonas sp. (strain MWYL1).